The sequence spans 764 residues: Cyclin-F (764 aa).

The Nuclear localization signal 1 signature appears at 19 to 27; sequence RKRVRKRAS. Residues 28–75 enclose the F-box domain; sequence AVSLLSLPEELLVFVLQCLSAEDLLSVRAVHSHLCDIIDTNASIWARV. A Cyclin N-terminal domain is found at 307 to 404; that stretch reads TKRYILVDWL…EVISVLDGKI (98 aa). The D box 1 motif lies at 309–312; the sequence is RYIL. Residues 570 to 575 carry the Nuclear localization signal 2 motif; it reads SSKRRR. Residues 583–738 form a PEST region; sequence RGAFVATPTA…PSQRIRRQVK (156 aa). Residues 662-754 form a disordered region; that stretch reads CEEDEQEPPT…HSAGEAEQED (93 aa). Low complexity predominate over residues 682–692; it reads SSSSTSSSSSS. A compositionally biased stretch (polar residues) spans 702-722; the sequence is SGYSSIQSFPSPTGSSALVSP. Basic residues predominate over residues 732 to 742; it reads RIRRQVKRKNT.

Belongs to the cyclin family. Cyclin AB subfamily. As to quaternary structure, component of the SCF(CCNF) complex. As to expression, expressed in the brain.

The protein resides in the nucleus. Its subcellular location is the cytoplasm. It localises to the perinuclear region. It is found in the cytoskeleton. The protein localises to the microtubule organizing center. The protein resides in the centrosome. Its subcellular location is the centriole. Its function is as follows. Substrate recognition component of a SCF (SKP1-CUL1-F-box protein) E3 ubiquitin-protein ligase complex which mediates the ubiquitination and subsequent proteasomal degradation of target proteins. The SCF(CCNF) E3 ubiquitin-protein ligase complex is an integral component of the ubiquitin proteasome system (UPS) and links proteasome degradation to the cell cycle. Mediates the substrate recognition and the proteasomal degradation of various target proteins during G2 phase involved in the regulation of cell cycle progression and in the maintenance of genome stability. May play a role in motor neuron development and axonal outgrowth. The sequence is that of Cyclin-F (ccnf) from Danio rerio (Zebrafish).